Here is an 82-residue protein sequence, read N- to C-terminus: Probable acyl carrier protein IacP (82 aa).

Positions 3–78 constitute a Carrier domain; sequence MDIEARVKKV…DICRVVKKSL (76 aa). Position 38 is an O-(pantetheine 4'-phosphoryl)serine (serine 38).

In terms of processing, 4'-phosphopantetheine is transferred from CoA to a specific serine of apo-IacP.

It localises to the cytoplasm. Its function is as follows. Acyl carrier protein. The protein is Probable acyl carrier protein IacP (iacP) of Salmonella typhimurium (strain SL1344).